Here is a 437-residue protein sequence, read N- to C-terminus: Peptidyl-prolyl cis-trans isomerase CYP38, chloroplastic (437 aa).

A chloroplast-targeting transit peptide spans 1–36 (MAAAFASLPTFSVVNSSRFPRRRIGFSCSKKPLEVR). The N-terminal 56 residues, 37–92 (CSSGNTRYTKQRGAFTSLKECAISLALSVGLMVSVPSIALPPNAHAVANPVIPDVS), are a transit peptide targeting the thylakoid. The PPIase cyclophilin-type domain occupies 245–437 (VKIKDNPNIE…LANPSYKIAG (193 aa)).

Ubiquitous. Lower levels of expression in roots.

The protein resides in the plastid. It is found in the chloroplast thylakoid lumen. The enzyme catalyses [protein]-peptidylproline (omega=180) = [protein]-peptidylproline (omega=0). Required for the assembly and stabilization of PSII, but has no PPIases activity. The protein is Peptidyl-prolyl cis-trans isomerase CYP38, chloroplastic (CYP38) of Arabidopsis thaliana (Mouse-ear cress).